The chain runs to 372 residues: Formylglycine-generating enzyme (372 aa).

The signal sequence occupies residues 1 to 31 (MAAPAREPALRCCIRLARVFLLLVLACEVAG). C48 and C50 form a disulfide bridge. Residues 61–80 (SSAAAQRYSREANAPGLTSG) form a disordered region. E128 contributes to the Ca(2+) binding site. N139 is a glycosylation site (N-linked (GlcNAc...) asparagine). Intrachain disulfides connect C216–C363 and C233–C344. The Ca(2+) site is built by N257, I258, D271, F273, N291, G294, and E298. Cu(2+) is bound by residues C334 and C339. Positions 339–358 (CYRYRCAARSQNTPDSSASN) are interaction with sulfatases.

Belongs to the sulfatase-modifying factor family. As to quaternary structure, monomer, homodimer and heterodimer with SUMF2. Cu(2+) is required as a cofactor. Post-translationally, N-glycosylated. Contains high-mannose-type oligosaccharides.

Its subcellular location is the endoplasmic reticulum lumen. The catalysed reaction is L-cysteinyl-[sulfatase] + 2 a thiol + O2 = an organic disulfide + 3-oxo-L-alanyl-[sulfatase] + hydrogen sulfide + H2O + H(+). Its pathway is protein modification; sulfatase oxidation. Its function is as follows. Oxidase that catalyzes the conversion of cysteine to 3-oxoalanine on target proteins, using molecular oxygen and an unidentified reducing agent. 3-oxoalanine modification, which is also named formylglycine (fGly), occurs in the maturation of arylsulfatases and some alkaline phosphatases that use the hydrated form of 3-oxoalanine as a catalytic nucleophile. Known substrates include GALNS, ARSA, STS and ARSE. The chain is Formylglycine-generating enzyme from Mus musculus (Mouse).